Here is a 148-residue protein sequence, read N- to C-terminus: MKSSIEPDFWKHKTLLEMTDAEWEALCDGCGKCCYRKFIEGHGKRKKLYYTRIACNLLDLETGRCTNYAKRFQLETDCTKLTKKNLPDFHWLPPTCAYRLLNENKPLFDWHPLISGDPHSVKKANILIKQGIHEKDVIDWFEFVVDGH.

This sequence belongs to the UPF0260 family.

This Pasteurella multocida (strain Pm70) protein is UPF0260 protein PM0539.